The primary structure comprises 603 residues: DNA mismatch repair protein MutL (603 aa).

Belongs to the DNA mismatch repair MutL/HexB family.

In terms of biological role, this protein is involved in the repair of mismatches in DNA. It is required for dam-dependent methyl-directed DNA mismatch repair. May act as a 'molecular matchmaker', a protein that promotes the formation of a stable complex between two or more DNA-binding proteins in an ATP-dependent manner without itself being part of a final effector complex. This is DNA mismatch repair protein MutL from Nitrobacter winogradskyi (strain ATCC 25391 / DSM 10237 / CIP 104748 / NCIMB 11846 / Nb-255).